A 201-amino-acid chain; its full sequence is 3-isopropylmalate dehydratase small subunit (201 aa).

Belongs to the LeuD family. LeuD type 1 subfamily. Heterodimer of LeuC and LeuD.

It carries out the reaction (2R,3S)-3-isopropylmalate = (2S)-2-isopropylmalate. It functions in the pathway amino-acid biosynthesis; L-leucine biosynthesis; L-leucine from 3-methyl-2-oxobutanoate: step 2/4. Functionally, catalyzes the isomerization between 2-isopropylmalate and 3-isopropylmalate, via the formation of 2-isopropylmaleate. This Salmonella paratyphi A (strain ATCC 9150 / SARB42) protein is 3-isopropylmalate dehydratase small subunit.